A 172-amino-acid polypeptide reads, in one-letter code: Protein-export protein SecB (172 aa).

Belongs to the SecB family. Homotetramer, a dimer of dimers. One homotetramer interacts with 1 SecA dimer.

Its subcellular location is the cytoplasm. Its function is as follows. One of the proteins required for the normal export of preproteins out of the cell cytoplasm. It is a molecular chaperone that binds to a subset of precursor proteins, maintaining them in a translocation-competent state. It also specifically binds to its receptor SecA. The sequence is that of Protein-export protein SecB from Stenotrophomonas maltophilia (strain K279a).